The following is a 39-amino-acid chain: Photosystem II reaction center protein L (39 aa).

The chain crosses the membrane as a helical span at residues 18-38 (SLYLGVLSVLVLGILFSSYFF).

The protein belongs to the PsbL family. In terms of assembly, PSII is composed of 1 copy each of membrane proteins PsbA, PsbB, PsbC, PsbD, PsbE, PsbF, PsbH, PsbI, PsbJ, PsbK, PsbL, PsbM, PsbT, PsbX, PsbY, Psb30/Ycf12, peripheral proteins PsbO, CyanoQ (PsbQ), PsbU, PsbV and a large number of cofactors. It forms dimeric complexes.

It is found in the cellular thylakoid membrane. Its function is as follows. One of the components of the core complex of photosystem II (PSII). PSII is a light-driven water:plastoquinone oxidoreductase that uses light energy to abstract electrons from H(2)O, generating O(2) and a proton gradient subsequently used for ATP formation. It consists of a core antenna complex that captures photons, and an electron transfer chain that converts photonic excitation into a charge separation. This subunit is found at the monomer-monomer interface and is required for correct PSII assembly and/or dimerization. The polypeptide is Photosystem II reaction center protein L (Prochlorococcus marinus (strain MIT 9515)).